The sequence spans 963 residues: Longitudinals lacking protein, isoforms J/P/Q/S/Z (963 aa).

The BTB domain maps to 32-97 (VDCTLAAEGK…MYRGEVNISQ (66 aa)). Disordered regions lie at residues 115 to 200 (LSDN…SSVL), 228 to 340 (SSGP…ASAS), 447 to 469 (DAQQRDPQDEAGQNEGGESRIRV), and 482 to 520 (GKSSDEPSDKLTQSKKSLISDAKTTNKTSTPIRPKVSTT). Low complexity-rich tracts occupy residues 162-175 (SGDVSGSREGSSSP), 228-251 (SSGPAAGTSSQASSTQQQQPLTST), 263-293 (TSSTAAPASGASASAAVQQAHLHQQQAQTTS), and 329-340 (NSATGPNPASAS). Residues 491–512 (KLTQSKKSLISDAKTTNKTSTP) show a composition bias toward polar residues. The segment at 849 to 871 (WVCRNCNRTYKWKNSLKCHLKNE) adopts a C2H2-type 1; degenerate zinc-finger fold. A C2H2-type 2; degenerate zinc finger spans residues 878–901 (YFCSKMCGYATNVHSNLKRHLNTK). The disordered stretch occupies residues 900–963 (TKCRDREKDA…YTLVFQNDSA (64 aa)). Positions 901 to 915 (KCRDREKDADDEKKP) are enriched in basic and acidic residues. Low complexity predominate over residues 937-953 (SSSNNNNNGGGSSTSST). The span at 954–963 (YTLVFQNDSA) shows a compositional bias: polar residues.

As to expression, by stage 11, isoform Q, isoform P and isoform Z are expressed throughout the mesoderm. From stage 15, expression of isoform P expands to all tissues, whereas expression of isoform Z and isoform Q becomes restricted during later stages; starting from stage 14 to 16, isoform Z is expressed in muscle, and isoform Q and isoform Z are expressed in the CNS. For some isoforms, expression is also seen in specific types of cells in the embryo; isoform Z is expressed in the ventral furrow at stage 5, and isoform Q is expressed around the tracheal pits at stage 11. Isoform Z also shows transient enrichment in a dorsal cell layer in the CNS at stages 13 and 14.

It is found in the nucleus. Its function is as follows. Putative transcription factor required for axon growth and guidance in the central and peripheral nervous systems. Repels CNS axons away from the midline by promoting the expression of the midline repellent sli and its receptor robo. In Drosophila melanogaster (Fruit fly), this protein is Longitudinals lacking protein, isoforms J/P/Q/S/Z.